A 152-amino-acid polypeptide reads, in one-letter code: Large ribosomal subunit protein uL15 (152 aa).

Residues 1-12 (MTSTLNTLKSNT) are compositionally biased toward polar residues. The disordered stretch occupies residues 1–57 (MTSTLNTLKSNTGSRKKKLRKGRGIAAGQGASCGFGMRGQKSRSGRPTRPGFEGGQM). Over residues 14–23 (SRKKKLRKGR) the composition is skewed to basic residues. Positions 25-37 (IAAGQGASCGFGM) are enriched in gly residues.

It belongs to the universal ribosomal protein uL15 family. As to quaternary structure, part of the 50S ribosomal subunit.

In terms of biological role, binds to the 23S rRNA. This Prochlorococcus marinus subsp. pastoris (strain CCMP1986 / NIES-2087 / MED4) protein is Large ribosomal subunit protein uL15.